Reading from the N-terminus, the 833-residue chain is RNA-binding protein 5-A (833 aa).

The interval 1 to 87 (MGSDKRVSRS…GYHSDGDYMD (87 aa)) is disordered. In terms of domain architecture, RRM 1 spans 102-182 (KTIMLRGLPI…KTIAMHYSNP (81 aa)). The RanBP2-type zinc finger occupies 185-214 (KFEDWLCNKCGLYNFRRRLKCFRCGAAKAE). The region spanning 241-325 (SAIILRNIGP…KTIGVDFAKS (85 aa)) is the RRM 2 domain. Residues 396-428 (TGAAEQGTAPQAESSSPVPATTSAVVCQSPQMY) show a composition bias toward polar residues. Disordered regions lie at residues 396-458 (TGAA…EEAA) and 523-559 (AADG…TAQQ). The segment covering 429-458 (QQPGSPTQSSTSTVAASATPASGTSAEEAA) has biased composition (low complexity). The segment at 667–692 (LACLLCRRQFPNKDALTRHQQLSDLH) adopts a C2H2-type zinc-finger fold. The region spanning 761–807 (NSNIGNKMLQAMGWKEGSGLGRKSQGITAPIQAQVRMRGAGLGAKGS) is the G-patch domain.

It belongs to the RBM5/RBM10 family. As to quaternary structure, component of the spliceosome A complex (also known as the prespliceosome). Appears to dissociate from the spliceosome upon formation of the spliceosome B complex (also known as the precatalytic spliceosome), in which the heterotrimeric U4/U6.U5 snRNPs are bound.

The protein resides in the nucleus. In terms of biological role, component of the spliceosome A complex. Regulates alternative splicing of a number of mRNAs. May modulate splice site pairing after recruitment of the U1 and U2 snRNPs to the 5' and 3' splice sites of the intron. The protein is RNA-binding protein 5-A (rbm5-a) of Xenopus laevis (African clawed frog).